A 642-amino-acid chain; its full sequence is 1-deoxy-D-xylulose-5-phosphate synthase (642 aa).

Thiamine diphosphate is bound by residues histidine 79 and 120–122 (AHS). Aspartate 155 contributes to the Mg(2+) binding site. Residues 156–157 (GS), asparagine 184, tyrosine 293, and glutamate 375 each bind thiamine diphosphate. Asparagine 184 serves as a coordination point for Mg(2+).

The protein belongs to the transketolase family. DXPS subfamily. Homodimer. Mg(2+) is required as a cofactor. Requires thiamine diphosphate as cofactor.

The catalysed reaction is D-glyceraldehyde 3-phosphate + pyruvate + H(+) = 1-deoxy-D-xylulose 5-phosphate + CO2. It participates in metabolic intermediate biosynthesis; 1-deoxy-D-xylulose 5-phosphate biosynthesis; 1-deoxy-D-xylulose 5-phosphate from D-glyceraldehyde 3-phosphate and pyruvate: step 1/1. Catalyzes the acyloin condensation reaction between C atoms 2 and 3 of pyruvate and glyceraldehyde 3-phosphate to yield 1-deoxy-D-xylulose-5-phosphate (DXP). The protein is 1-deoxy-D-xylulose-5-phosphate synthase of Ruegeria pomeroyi (strain ATCC 700808 / DSM 15171 / DSS-3) (Silicibacter pomeroyi).